The sequence spans 382 residues: RNA exonuclease 3 (382 aa).

The Exonuclease domain occupies 223-369 (VLALDCEMAY…EDAIAAMDVV (147 aa)).

This sequence belongs to the REXO1/REXO3 family.

It localises to the cytoplasm. It is found in the nucleus. Its function is as follows. 3' to 5' exoribonuclease required for proper 3' end maturation of MRP RNA and of the U5L snRNA. This is RNA exonuclease 3 (REX3) from Eremothecium gossypii (strain ATCC 10895 / CBS 109.51 / FGSC 9923 / NRRL Y-1056) (Yeast).